A 299-amino-acid chain; its full sequence is UTP--glucose-1-phosphate uridylyltransferase (299 aa).

This sequence belongs to the UDPGP type 2 family.

It carries out the reaction alpha-D-glucose 1-phosphate + UTP + H(+) = UDP-alpha-D-glucose + diphosphate. It participates in carbohydrate metabolism; nucleotide-sugar metabolism. The protein operates within capsule biogenesis; capsule polysaccharide biosynthesis. This chain is UTP--glucose-1-phosphate uridylyltransferase (cap4C), found in Streptococcus pneumoniae serotype 4 (strain ATCC BAA-334 / TIGR4).